A 155-amino-acid polypeptide reads, in one-letter code: Ribonuclease H (155 aa).

Residues 1-142 (MLKQVEIFTD…CDELARNAAG (142 aa)) form the RNase H type-1 domain. Mg(2+) contacts are provided by aspartate 10, glutamate 48, aspartate 70, and aspartate 134.

Belongs to the RNase H family. As to quaternary structure, monomer. It depends on Mg(2+) as a cofactor.

The protein localises to the cytoplasm. The enzyme catalyses Endonucleolytic cleavage to 5'-phosphomonoester.. Functionally, endonuclease that specifically degrades the RNA of RNA-DNA hybrids. This chain is Ribonuclease H, found in Erwinia tasmaniensis (strain DSM 17950 / CFBP 7177 / CIP 109463 / NCPPB 4357 / Et1/99).